The chain runs to 153 residues: Aspartate carbamoyltransferase regulatory chain (153 aa).

Cys-109, Cys-114, Cys-138, and Cys-141 together coordinate Zn(2+).

Belongs to the PyrI family. As to quaternary structure, contains catalytic and regulatory chains. The cofactor is Zn(2+).

Involved in allosteric regulation of aspartate carbamoyltransferase. In Cronobacter sakazakii (strain ATCC BAA-894) (Enterobacter sakazakii), this protein is Aspartate carbamoyltransferase regulatory chain.